A 947-amino-acid polypeptide reads, in one-letter code: Mitogen-activated protein kinase kinase kinase 14 (947 aa).

Disordered regions lie at residues M1–S37 and K135–Q171. A compositionally biased stretch (basic residues) spans K135–S151. The Protein kinase domain maps to A400–L655. Residues T401–R653 form an interaction with ZFP91 region. Residues L406 to V414 and K429 each bind ATP. D515 acts as the Proton acceptor in catalysis. Position 559 is a phosphothreonine (T559). Disordered stretches follow at residues K662–P766 and L805–S830. Residues W665 to H674 show a composition bias toward basic and acidic residues. Residues L713–S727 are compositionally biased toward pro residues. Positions E741–P752 are enriched in low complexity. A compositionally biased stretch (polar residues) spans S814–H829.

Belongs to the protein kinase superfamily. STE Ser/Thr protein kinase family. MAP kinase kinase kinase subfamily. Interacts with TRAF2, TRAF5, TRAF6, IKKA and NFKB2/P100. Interacts with TRAF3 and PELI3. Interacts with NIBP; the interaction is direct. Interacts with ARRB1 and ARRB2. Interacts with GRB10. Interacts with ZFP91. Interacts with NLRP12; this interaction promotes proteasomal degradation of MAP3K14. Directly interacts with DDX3X. Interacts (via C-terminus and kinase domain) with PPPC3A (via N-terminus) and PPP3CB. Post-translationally, autophosphorylated. Phosphorylation at Thr-559 is required to activate its kinase activity and 'Lys-63'-linked polyubiquitination. Phosphorylated by CHUK/IKKA leading to MAP3K14 destabilization. Ubiquitinated. Undergoes both 'Lys-48'- and 'Lys-63'-linked polyubiquitination. 'Lys-48'-linked polyubiquitination leads to its degradation by the proteasome, while 'Lys-63'-linked polyubiquitination stabilizes and activates it. As to expression, weakly expressed in testis, small intestine, spleen, thymus, peripheral blood leukocytes, prostate, ovary and colon.

It is found in the cytoplasm. It carries out the reaction L-seryl-[protein] + ATP = O-phospho-L-seryl-[protein] + ADP + H(+). The catalysed reaction is L-threonyl-[protein] + ATP = O-phospho-L-threonyl-[protein] + ADP + H(+). Its function is as follows. Lymphotoxin beta-activated kinase which seems to be exclusively involved in the activation of NF-kappa-B and its transcriptional activity. Phosphorylates CHUK/IKKA, thereby promoting proteolytic processing of NFKB2/P100, which leads to NF-kappa-B activation via the non-canonical pathway. Has an essential role in the non-canonical NF-kappa-B signaling that regulates genes encoding molecules involved in B-cell survival, lymphoid organogenesis, and immune response. Could act in a receptor-selective manner. The chain is Mitogen-activated protein kinase kinase kinase 14 from Homo sapiens (Human).